Reading from the N-terminus, the 114-residue chain is Integration host factor subunit alpha (114 aa).

This sequence belongs to the bacterial histone-like protein family. As to quaternary structure, heterodimer of an alpha and a beta chain.

Functionally, this protein is one of the two subunits of integration host factor, a specific DNA-binding protein that functions in genetic recombination as well as in transcriptional and translational control. This is Integration host factor subunit alpha from Afipia carboxidovorans (strain ATCC 49405 / DSM 1227 / KCTC 32145 / OM5) (Oligotropha carboxidovorans).